A 378-amino-acid chain; its full sequence is Erythronate-4-phosphate dehydrogenase (378 aa).

Residues Ser-45 and Thr-66 each contribute to the substrate site. Residues Asp-146 and Thr-175 each contribute to the NAD(+) site. Arg-208 is a catalytic residue. Asp-232 contributes to the NAD(+) binding site. Glu-237 is an active-site residue. His-254 functions as the Proton donor in the catalytic mechanism. Gly-257 is a binding site for NAD(+). Residue Tyr-258 coordinates substrate.

The protein belongs to the D-isomer specific 2-hydroxyacid dehydrogenase family. PdxB subfamily. In terms of assembly, homodimer.

The protein localises to the cytoplasm. The enzyme catalyses 4-phospho-D-erythronate + NAD(+) = (R)-3-hydroxy-2-oxo-4-phosphooxybutanoate + NADH + H(+). It participates in cofactor biosynthesis; pyridoxine 5'-phosphate biosynthesis; pyridoxine 5'-phosphate from D-erythrose 4-phosphate: step 2/5. Functionally, catalyzes the oxidation of erythronate-4-phosphate to 3-hydroxy-2-oxo-4-phosphonooxybutanoate. This Shigella flexneri serotype 5b (strain 8401) protein is Erythronate-4-phosphate dehydrogenase.